A 974-amino-acid chain; its full sequence is Protein bicaudal C homolog 1 (974 aa).

Positions 1 to 50 (MAAQGEPGYLAAQSDPGSNSERSTDSPVPGSEDDLVAGATLHSPEWSEER) are disordered. Residues serine 26, serine 31, and serine 43 each carry the phosphoserine modification. KH domains lie at 132-199 (RVTL…RVRI) and 284-348 (PVST…RQYL). Lysine 398 carries the N6-acetyllysine modification. Phosphoserine occurs at positions 576, 612, and 679. Disordered regions lie at residues 593–644 (VLSA…GDLK), 665–719 (GTKN…HLAP), and 783–846 (YKPT…KSTE). A compositionally biased stretch (polar residues) spans 602–619 (SIQTSGSEQTSPKSSPTE). The span at 690–703 (LADKKAPGSERAAE) shows a compositional bias: basic and acidic residues. The SAM domain maps to 873-936 (FKGSDLPELF…LLAISELNKN (64 aa)).

The protein belongs to the BicC family. Interacts (via KH domains) with ANKS6 (via SAM domain) in an RNA-dependent manner. Interacts with ANKS3.

It localises to the cytoplasm. Its function is as follows. Putative RNA-binding protein. Acts as a negative regulator of Wnt signaling. May be involved in regulating gene expression during embryonic development. In Homo sapiens (Human), this protein is Protein bicaudal C homolog 1 (BICC1).